The chain runs to 411 residues: Tyrosine--tRNA ligase (411 aa).

An L-tyrosine-binding site is contributed by Y34. Residues C39–S48 carry the 'HIGH' region motif. Positions 171 and 175 each coordinate L-tyrosine. Positions K231–T235 match the 'KMSKS' region motif. K234 contacts ATP. Positions I345–V411 constitute an S4 RNA-binding domain.

It belongs to the class-I aminoacyl-tRNA synthetase family. TyrS type 1 subfamily. In terms of assembly, homodimer.

The protein localises to the cytoplasm. The enzyme catalyses tRNA(Tyr) + L-tyrosine + ATP = L-tyrosyl-tRNA(Tyr) + AMP + diphosphate + H(+). Its function is as follows. Catalyzes the attachment of tyrosine to tRNA(Tyr) in a two-step reaction: tyrosine is first activated by ATP to form Tyr-AMP and then transferred to the acceptor end of tRNA(Tyr). In Rickettsia prowazekii (strain Madrid E), this protein is Tyrosine--tRNA ligase.